The chain runs to 360 residues: DNA polymerase IV (360 aa).

The 182-residue stretch at 8-189 folds into the UmuC domain; that stretch reads IIHVDMDCFF…LPLEKIPGVG (182 aa). Mg(2+) contacts are provided by Asp12 and Asp107. Glu108 is a catalytic residue.

Belongs to the DNA polymerase type-Y family. In terms of assembly, monomer. Mg(2+) is required as a cofactor.

The protein resides in the cytoplasm. The enzyme catalyses DNA(n) + a 2'-deoxyribonucleoside 5'-triphosphate = DNA(n+1) + diphosphate. Functionally, poorly processive, error-prone DNA polymerase involved in untargeted mutagenesis. Copies undamaged DNA at stalled replication forks, which arise in vivo from mismatched or misaligned primer ends. These misaligned primers can be extended by PolIV. Exhibits no 3'-5' exonuclease (proofreading) activity. May be involved in translesional synthesis, in conjunction with the beta clamp from PolIII. The chain is DNA polymerase IV from Vibrio cholerae serotype O1 (strain ATCC 39315 / El Tor Inaba N16961).